The primary structure comprises 591 residues: Guanylate-binding protein 2 (591 aa).

The tract at residues M1 to C309 is GTPase domain (Globular). Residues T35 to N276 form the GB1/RHD3-type G domain. Residues G45–S52, R181–D182, and L245 each bind GTP. C588 carries the post-translational modification Cysteine methyl ester. Residue C588 is the site of S-geranylgeranyl cysteine attachment. The propeptide at N589 to L591 is removed in mature form.

The protein belongs to the TRAFAC class dynamin-like GTPase superfamily. GB1/RHD3 GTPase family. GB1 subfamily. As to quaternary structure, homodimer; homodimerization occurs upon GTP-binding and is required for the association with membranous structures. Heterodimer with other family members, including GBP1, GBP3, GBP4 and GBP5. In terms of processing, (Microbial infection) Ubiquitinated by S.flexneri IpaH9.8, leading to its degradation by the proteasome, thereby preventing its ability to promote host defense against bacterial infection. Isoprenylation is required for proper subcellular location.

It is found in the cytoplasmic vesicle membrane. The protein resides in the golgi apparatus membrane. Its subcellular location is the cytoplasm. The protein localises to the perinuclear region. It catalyses the reaction GTP + H2O = GDP + phosphate + H(+). Its function is as follows. Interferon (IFN)-inducible GTPase that plays important roles in innate immunity against a diverse range of bacterial, viral and protozoan pathogens. Hydrolyzes GTP to GMP in 2 consecutive cleavage reactions, but the major reaction product is GDP. Following infection, recruited to the pathogen-containing vacuoles or vacuole-escaped bacteria and acts as a positive regulator of inflammasome assembly by promoting the release of inflammasome ligands from bacteria. Acts by promoting lysis of pathogen-containing vacuoles, releasing pathogens into the cytosol. Following pathogen release in the cytosol, promotes recruitment of proteins that mediate bacterial cytolysis: this liberates ligands that are detected by inflammasomes, such as lipopolysaccharide (LPS) that activates the non-canonical CASP4/CASP11 inflammasome or double-stranded DNA (dsDNA) that activates the AIM2 inflammasome. Confers protection to the protozoan pathogen Toxoplasma gondii. Independently of its GTPase activity, acts as an inhibitor of various viruses infectivity, such as HIV-1, Zika and influenza A viruses, by inhibiting FURIN-mediated maturation of viral envelope proteins. The protein is Guanylate-binding protein 2 of Homo sapiens (Human).